Consider the following 303-residue polypeptide: DnaJ homolog subfamily C member 17 (303 aa).

One can recognise a J domain in the interval 11-76; that stretch reads DLYALLGIEE…AARAAYDKVR (66 aa). Basic and acidic residues-rich tracts occupy residues 78 to 106 and 150 to 166; these read ARKQ…RERQ and IRQD…ENTE. Disordered stretches follow at residues 78–124 and 150–170; these read ARKQ…TTTL and IRQD…GKGT. In terms of domain architecture, RRM spans 178–249; the sequence is KCKKEDESQG…NPLKVSWLEG (72 aa). K264 is modified (N6-methyllysine).

Its subcellular location is the cytoplasm. The protein localises to the nucleus. May negatively affect PAX8-induced thyroglobulin/TG transcription. The polypeptide is DnaJ homolog subfamily C member 17 (Dnajc17) (Rattus norvegicus (Rat)).